Consider the following 484-residue polypeptide: Gasdermin-D (484 aa).

Tyr-37 is modified (phosphotyrosine). Cys-56 carries the S-(2-succinyl)cysteine modification. A run of 2 beta stranded transmembrane segments spans residues 91 to 97 and 103 to 108; these read QGSVELA and KIAGGA. Position 158 is a phosphotyrosine (Tyr-158). 2 beta stranded membrane passes run 180–186 and 191–197; these read GSGRFSL and CLQGEGQ. Ser-185 bears the Phosphoserine mark. S-(2-succinyl)cysteine occurs at positions 191 and 268. The S-palmitoyl cysteine moiety is linked to residue Cys-191. Residues 277 to 296 form a linker helix loop region; sequence VPAEGAFTEDFQGLRAEVET. Cys-309 is modified (S-(2-succinyl)cysteine). Ser-338 is a glycosylation site (O-linked (GlcNAc) serine). Cys-467 bears the S-(2-succinyl)cysteine mark.

This sequence belongs to the gasdermin family. In terms of assembly, homooligomer; homooligomeric ring-shaped pore complex containing 27-28 subunits when inserted in the membrane. Homooligomerization is promoted by the mTORC1 complex in macrophages. In response to a canonical inflammasome stimulus, such as nigericin, recruited to NLRP3 inflammasone with similar kinetics to that of uncleaved CASP1 precursor. Although this recruitment is also observed in the absence of PYCARD, it is more efficient in its presence. In terms of processing, cleavage at Asp-275 by CASP1 (mature and uncleaved precursor forms), CASP4, CASP5 or CASP8 relieves autoinhibition and is sufficient to initiate pyroptosis. Cleavage by CASP1 and CASP4 is not strictly dependent on the consensus cleavage site on GSDMD but depends on an exosite interface on CASP1 that recognizes and binds the Gasdermin-D, C-terminal (GSDMD-CT) part. Cleavage by CASP8 takes place following inactivation of MAP3K7/TAK1 by Yersinia toxin YopJ. Cleavage at Asp-87 by CASP3 or CASP7 inactivates the ability to mediate pyroptosis, but generates the Gasdermin-D, p13 chain, which translocates to the nucleus and acts as a transcription regulator. Cleavage by papain allergen generates the Gasdermin-D, p40 chain. Post-translationally, palmitoylated at Cys-191 by ZDHHC5 and ZDHHC9 in response to microbial infection and danger signals. Palmitoylation takes place before cleavage by caspases (CASP1, CASP4, CASP5 or CASP8) and is required for membrane translocation and pore formation. Depalmitoylated by LYPLA2. Succination of Cys-191 by the Krebs cycle intermediate fumarate, which leads to S-(2-succinyl)cysteine residues, inhibits processing by caspases, and ability to initiate pyroptosis. Succination modification is catalyzed by a non-enzymatic reaction caused by an accumulation of fumarate. In terms of processing, glycosylated: O-GlcNAcylation by OGT leads to reduced cleavage by CASP4 and decreased LPS-induced endothelial cell pyroptosis. Post-translationally, (Microbial infection) Cleaved and inactivated by Protease 3C from Human enterovirus 71 (EV71), preventing GSDMD-mediated pyroptosis. (Microbial infection) Cleaved and inactivated by the 3C-like proteinase nsp5 from human coronavirus SARS-CoV-2, preventing GSDMD-mediated pyroptosis. In terms of processing, (Microbial infection) Ubiquitinated by S.flexneri IpaH7.8, leading to its degradation by the proteasome. In terms of tissue distribution, expressed in the suprabasal cells of esophagus, as well as in the isthmus/neck, pit, and gland of the stomach, suggesting preferential expression in differentiating cells.

It is found in the cytoplasm. Its subcellular location is the cytosol. The protein localises to the inflammasome. The protein resides in the cell membrane. It localises to the secreted. It is found in the mitochondrion membrane. Its subcellular location is the nucleus. The full-length protein before cleavage is inactive: intramolecular interactions between N- and C-terminal domains mediate autoinhibition in the absence of activation signal. The intrinsic pyroptosis-inducing activity is carried by the released N-terminal moiety (Gasdermin-D, N-terminal) following cleavage by caspases CASP1, CASP4, CASP5 or CASP8. Cleavage at Asp-87 by CASP3 or CASP7 inactivates the ability to mediate pyroptosis. Homooligomerization and pore formation is specifically inhibited by VHH(GSDMD-1) and, to a lesser extent, VHH(GSDMD-2) nanobodies, protecting against excessive pyroptosis. Inhibited by small molecule NU6300, which covalently reacts with Cys-191, thereby preventing palmitoylation and pyroptosis. Functionally, precursor of a pore-forming protein that plays a key role in host defense against pathogen infection and danger signals. This form constitutes the precursor of the pore-forming protein: upon cleavage, the released N-terminal moiety (Gasdermin-D, N-terminal) binds to membranes and forms pores, triggering pyroptosis. Its function is as follows. Promotes pyroptosis in response to microbial infection and danger signals. Produced by the cleavage of gasdermin-D by inflammatory caspases CASP1, CASP4 or CASP5 in response to canonical, as well as non-canonical (such as cytosolic LPS) inflammasome activators. After cleavage, moves to the plasma membrane where it strongly binds to inner leaflet lipids, including monophosphorylated phosphatidylinositols, such as phosphatidylinositol 4-phosphate, bisphosphorylated phosphatidylinositols, such as phosphatidylinositol (4,5)-bisphosphate, as well as phosphatidylinositol (3,4,5)-bisphosphate, and more weakly to phosphatidic acid and phosphatidylserine. Homooligomerizes within the membrane and forms pores of 10-15 nanometers (nm) of inner diameter, allowing the release of mature interleukin-1 (IL1B and IL18) and triggering pyroptosis. Gasdermin pores also allow the release of mature caspase-7 (CASP7). In some, but not all, cells types, pyroptosis is followed by pyroptotic cell death, which is caused by downstream activation of ninjurin-1 (NINJ1), which mediates membrane rupture (cytolysis). Also forms pores in the mitochondrial membrane, resulting in release of mitochondrial DNA (mtDNA) into the cytosol. Gasdermin-D, N-terminal released from pyroptotic cells into the extracellular milieu rapidly binds to and kills both Gram-negative and Gram-positive bacteria, without harming neighboring mammalian cells, as it does not disrupt the plasma membrane from the outside due to lipid-binding specificity. Under cell culture conditions, also active against intracellular bacteria, such as Listeria monocytogenes. Also active in response to MAP3K7/TAK1 inactivation by Yersinia toxin YopJ, which triggers cleavage by CASP8 and subsequent activation. Required for mucosal tissue defense against enteric pathogens. Activation of the non-canonical inflammasome in brain endothelial cells can lead to excessive pyroptosis, leading to blood-brain barrier breakdown. Strongly binds to bacterial and mitochondrial lipids, including cardiolipin. Does not bind to unphosphorylated phosphatidylinositol, phosphatidylethanolamine nor phosphatidylcholine. In terms of biological role, transcription coactivator produced by the cleavage by CASP3 or CASP7 in the upper small intestine in response to dietary antigens. Required to maintain food tolerance in small intestine: translocates to the nucleus and acts as a coactivator for STAT1 to induce the transcription of CIITA and MHC class II molecules, which in turn induce type 1 regulatory T (Tr1) cells in upper small intestine. Produced by the cleavage by papain allergen. After cleavage, moves to the plasma membrane and homooligomerizes within the membrane and forms pores of 10-15 nanometers (nm) of inner diameter, allowing the specific release of mature interleukin-33 (IL33), promoting type 2 inflammatory immune response. This is Gasdermin-D from Homo sapiens (Human).